Consider the following 756-residue polypeptide: Inactive carboxypeptidase-like protein X2 (756 aa).

Residues 1–25 (MSRPGTATPALALVLLAVTLAGVGA) form the signal peptide. Residues 51–131 (EPELETFSPP…DHSVRVARED (81 aa)) form a disordered region. Positions 68–78 (EWERRPQEPRP) are enriched in basic and acidic residues. Residues 79 to 90 (PKRATKPKKAPK) are compositionally biased toward basic residues. A compositionally biased stretch (basic and acidic residues) spans 113 to 131 (KSSEKAANDDHSVRVARED). The F5/8 type C domain occupies 134–293 (ESCPPLGLET…ICMRMEILGC (160 aa)). A disulfide bridge links C136 with C293. N-linked (GlcNAc...) asparagine glycosylation is found at N231, N241, N281, N337, and N491. The region spanning 317–640 (KHHNYKEMRQ…ESLIVFMEQV (324 aa)) is the Peptidase M14 domain.

It belongs to the peptidase M14 family.

The protein resides in the secreted. May be involved in cell-cell interactions. The polypeptide is Inactive carboxypeptidase-like protein X2 (CPXM2) (Homo sapiens (Human)).